Reading from the N-terminus, the 379-residue chain is Acyl-CoA dehydrogenase (379 aa).

The protein belongs to the acyl-CoA dehydrogenase family. FAD serves as cofactor.

The enzyme catalyses a 2,3-saturated acyl-CoA + A = a 2,3-dehydroacyl-CoA + AH2. This Bacillus subtilis (strain 168) protein is Acyl-CoA dehydrogenase (mmgC).